The sequence spans 205 residues: Ras-like protein 3 (205 aa).

16-23 (GGGGVGKS) is a GTP binding site. The Effector region motif lies at 38–46 (YDPTIEDSY). GTP is bound by residues 63–67 (DTAGQ) and 122–125 (NKCD). Cysteine methyl ester is present on C202. C202 carries the S-farnesyl cysteine lipid modification. Residues 203–205 (ILM) constitute a propeptide, removed in mature form.

It belongs to the small GTPase superfamily. Ras family.

Its subcellular location is the cell membrane. The catalysed reaction is GTP + H2O = GDP + phosphate + H(+). With respect to regulation, alternates between an inactive form bound to GDP and an active form bound to GTP. Activated by a guanine nucleotide-exchange factor (GEF) and inactivated by a GTPase-activating protein (GAP). In Mucor circinelloides f. lusitanicus (Mucor racemosus var. lusitanicus), this protein is Ras-like protein 3 (RAS3).